Here is a 714-residue protein sequence, read N- to C-terminus: Rho-GTPase-activating protein RGD2 (714 aa).

Residues 2–441 (LSFCDYFWSE…LENDIDPTAD (440 aa)) form the F-BAR domain. A DEP domain is found at 218 to 298 (PKTDYKLPLI…WKNTAYMFAN (81 aa)). The Rho-GAP domain maps to 475 to 704 (VDLETRCRLD…DLLTHKKQIF (230 aa)).

As to quaternary structure, interacts with CDC42 and RHO5.

Functionally, acts in signal transduction. Activates CDC42 and RHO5. This Saccharomyces cerevisiae (strain ATCC 204508 / S288c) (Baker's yeast) protein is Rho-GTPase-activating protein RGD2 (RGD2).